The following is a 456-amino-acid chain: MTOR-associated protein MEAK7 (456 aa).

Gly2 carries the N-myristoyl glycine lipid modification. The TLDc domain maps to 244-412 (SILDVLSVMY…FDKMEVWAVG (169 aa)).

In terms of assembly, interacts (via C-terminal domain) with MTOR and MLST8; the interaction with MTOR increases upon nutrient stimulation.

Its subcellular location is the membrane. It is found in the cytoplasm. It localises to the lysosome. Its function is as follows. Activates an alternative mTOR signaling through RPS6KB2 activation and EIF4EBP1 repression to regulate cell proliferation and migration. Recruits MTOR at the lysosome, essential for MTOR signaling at the lysosome. This is MTOR-associated protein MEAK7 from Homo sapiens (Human).